We begin with the raw amino-acid sequence, 67 residues long: ATP synthase protein 8 (67 aa).

The chain crosses the membrane as a helical span at residues 8-24 (TWFITILATILTLFIIM). N6-acetyllysine; alternate is present on Lys54. Position 54 is an N6-succinyllysine; alternate (Lys54). Lys57 is modified (N6-acetyllysine).

It belongs to the ATPase protein 8 family. As to quaternary structure, F-type ATPases have 2 components, CF(1) - the catalytic core - and CF(0) - the membrane proton channel. Component of an ATP synthase complex composed of ATP5PB, ATP5MC1, ATP5F1E, ATP5PD, ATP5ME, ATP5PF, ATP5MF, MT-ATP6, MT-ATP8, ATP5F1A, ATP5F1B, ATP5F1D, ATP5F1C, ATP5PO, ATP5MG, ATP5MK and ATP5MJ. Interacts with PRICKLE3.

The protein resides in the mitochondrion membrane. Functionally, mitochondrial membrane ATP synthase (F(1)F(0) ATP synthase or Complex V) produces ATP from ADP in the presence of a proton gradient across the membrane which is generated by electron transport complexes of the respiratory chain. F-type ATPases consist of two structural domains, F(1) - containing the extramembraneous catalytic core and F(0) - containing the membrane proton channel, linked together by a central stalk and a peripheral stalk. During catalysis, ATP synthesis in the catalytic domain of F(1) is coupled via a rotary mechanism of the central stalk subunits to proton translocation. Part of the complex F(0) domain. Minor subunit located with subunit a in the membrane. This Artibeus jamaicensis (Jamaican fruit-eating bat) protein is ATP synthase protein 8 (MT-ATP8).